We begin with the raw amino-acid sequence, 55 residues long: ATP synthase F(0) complex subunit 8 (55 aa).

A helical transmembrane segment spans residues 7 to 24 (APWFSIMIMTWLTLALLI). The segment at 34-55 (TNPPSSKPSLTTKPTPWAWPWT) is disordered.

This sequence belongs to the ATPase protein 8 family. In terms of assembly, component of the ATP synthase complex composed at least of ATP5F1A/subunit alpha, ATP5F1B/subunit beta, ATP5MC1/subunit c (homooctomer), MT-ATP6/subunit a, MT-ATP8/subunit 8, ATP5ME/subunit e, ATP5MF/subunit f, ATP5MG/subunit g, ATP5MK/subunit k, ATP5MJ/subunit j, ATP5F1C/subunit gamma, ATP5F1D/subunit delta, ATP5F1E/subunit epsilon, ATP5PF/subunit F6, ATP5PB/subunit b, ATP5PD/subunit d, ATP5PO/subunit OSCP. ATP synthase complex consists of a soluble F(1) head domain (subunits alpha(3) and beta(3)) - the catalytic core - and a membrane F(0) domain - the membrane proton channel (subunits c, a, 8, e, f, g, k and j). These two domains are linked by a central stalk (subunits gamma, delta, and epsilon) rotating inside the F1 region and a stationary peripheral stalk (subunits F6, b, d, and OSCP).

The protein resides in the mitochondrion membrane. In terms of biological role, subunit 8, of the mitochondrial membrane ATP synthase complex (F(1)F(0) ATP synthase or Complex V) that produces ATP from ADP in the presence of a proton gradient across the membrane which is generated by electron transport complexes of the respiratory chain. ATP synthase complex consist of a soluble F(1) head domain - the catalytic core - and a membrane F(1) domain - the membrane proton channel. These two domains are linked by a central stalk rotating inside the F(1) region and a stationary peripheral stalk. During catalysis, ATP synthesis in the catalytic domain of F(1) is coupled via a rotary mechanism of the central stalk subunits to proton translocation. In vivo, can only synthesize ATP although its ATP hydrolase activity can be activated artificially in vitro. Part of the complex F(0) domain. This chain is ATP synthase F(0) complex subunit 8, found in Aythya americana (Redhead).